A 275-amino-acid chain; its full sequence is uncharacterized protein (275 aa).

4 residues coordinate Mg(2+): E71, D85, I87, and D88. A substrate-binding site is contributed by E71. Substrate is bound at residue 87–90; sequence IDGT. The next 3 membrane-spanning stretches (helical) occupy residues 87 to 107, 112 to 132, and 178 to 198; these read IDGT…IAFV, PVLG…SVDG, and IVCL…RLAG. D208 serves as a coordination point for Mg(2+). D208 is a binding site for substrate.

It belongs to the inositol monophosphatase superfamily.

Its subcellular location is the cell membrane. This is an uncharacterized protein from Sinorhizobium fredii (strain NBRC 101917 / NGR234).